The following is a 202-amino-acid chain: MTDSESAAAVSVDAAAYREAMSRLASAVHLITTDGPGGRAGFTASAVCSVSDAPPTLLVCINRASSAYAALTQNGTLCVNTLGEGHETVASLFGGRTPVDERFAAGTWRRLRSGAPALADALVSFDCRIVGRHAVGSHDVLYCAVEAVAASGEADALLYSERRYRTLPRTPRSGSAPAEPARAPRAVGARPAEGPALALRSA.

Positions 168–202 are disordered; it reads PRTPRSGSAPAEPARAPRAVGARPAEGPALALRSA. Residues 171-196 are compositionally biased toward low complexity; the sequence is PRSGSAPAEPARAPRAVGARPAEGPA.

It belongs to the non-flavoprotein flavin reductase family. RutF subfamily.

The enzyme catalyses FMNH2 + NAD(+) = FMN + NADH + 2 H(+). Functionally, catalyzes the reduction of FMN to FMNH2 which is used to reduce pyrimidine by RutA via the Rut pathway. This Methylorubrum extorquens (strain PA1) (Methylobacterium extorquens) protein is FMN reductase (NADH) RutF 1.